A 242-amino-acid chain; its full sequence is Probable septum site-determining protein MinC (242 aa).

This sequence belongs to the MinC family. Interacts with MinD and FtsZ.

Functionally, cell division inhibitor that blocks the formation of polar Z ring septums. Rapidly oscillates between the poles of the cell to destabilize FtsZ filaments that have formed before they mature into polar Z rings. Prevents FtsZ polymerization. The chain is Probable septum site-determining protein MinC from Buchnera aphidicola subsp. Schizaphis graminum (strain Sg).